The sequence spans 534 residues: Pentatricopeptide repeat-containing protein At5g08305 (534 aa).

11 PPR repeats span residues Pro41 to Pro71, Pro72 to Pro106, Asp107 to Trp141, Asp142 to Lys172, Asn173 to Arg203, Asp204 to Lys238, Asn240 to Leu274, Thr275 to Lys305, Asp308 to Pro342, Asp343 to Pro377, and Lys378 to Lys408. The interval Met413–Asp488 is type E motif. The tract at residues Gly489 to Asn519 is type E(+) motif.

This sequence belongs to the PPR family. PCMP-E subfamily.

The polypeptide is Pentatricopeptide repeat-containing protein At5g08305 (PCMP-E105) (Arabidopsis thaliana (Mouse-ear cress)).